The primary structure comprises 464 residues: E3 ubiquitin-protein ligase MYLIP-B (464 aa).

An FERM domain is found at 1–279 (MLCHITRPDS…EIHAFYRCDT (279 aa)). An RING-type zinc finger spans residues 381-416 (CALCCEQEISAAFCPCGHMFCCYNCASQLQCCPVCR).

As to quaternary structure, interacts with anxa5.

The protein resides in the cytoplasm. Its subcellular location is the cytosol. It carries out the reaction S-ubiquitinyl-[E2 ubiquitin-conjugating enzyme]-L-cysteine + [acceptor protein]-L-lysine = [E2 ubiquitin-conjugating enzyme]-L-cysteine + N(6)-ubiquitinyl-[acceptor protein]-L-lysine.. It participates in protein modification; protein ubiquitination. Functionally, E3 ubiquitin-protein ligase that mediates ubiquitination and subsequent proteasomal degradation of myosin regulatory light chain (MRLC). Regulates cell movements during gastrulation by acting downstream of fz7 to antagonize the frizzled-signaling pathway. The protein is E3 ubiquitin-protein ligase MYLIP-B of Danio rerio (Zebrafish).